A 236-amino-acid polypeptide reads, in one-letter code: MATPHINAQPGDFAETVLMPGDPLRAKYIAETFLEDVKQVCDVRNMFGFTGTYKGKKVSVMGHGMGIPSCCIYVHELIAEYGVKNVIRVGSCGAVRDDVNLMDVVIGMGASTDSKVNRIRFNNHDFAAIADFSLLEEAVKQARAQEVPVKVGNVFSADLFYTPEADIFEKMEKLGILGVDMEAAGIYGVAADLGAKALTILTVSDHIIRGEKLSSEERQKSFNDMMKVALETAINI.

Histidine 5 serves as a coordination point for a purine D-ribonucleoside. Residues glycine 21, arginine 25, arginine 44, and arginine 88–serine 91 contribute to the phosphate site. A purine D-ribonucleoside-binding positions include aspartate 180–glutamate 182 and serine 204–aspartate 205. The Proton donor role is filled by aspartate 205.

It belongs to the PNP/UDP phosphorylase family. Homohexamer; trimer of homodimers.

It catalyses the reaction a purine D-ribonucleoside + phosphate = a purine nucleobase + alpha-D-ribose 1-phosphate. The catalysed reaction is a purine 2'-deoxy-D-ribonucleoside + phosphate = a purine nucleobase + 2-deoxy-alpha-D-ribose 1-phosphate. Functionally, catalyzes the reversible phosphorolytic breakdown of the N-glycosidic bond in the beta-(deoxy)ribonucleoside molecules, with the formation of the corresponding free purine bases and pentose-1-phosphate. The polypeptide is Purine nucleoside phosphorylase DeoD-type 2 (Vibrio parahaemolyticus serotype O3:K6 (strain RIMD 2210633)).